Here is a 577-residue protein sequence, read N- to C-terminus: Proline--tRNA ligase (577 aa).

Belongs to the class-II aminoacyl-tRNA synthetase family. ProS type 1 subfamily. As to quaternary structure, homodimer.

It localises to the cytoplasm. It carries out the reaction tRNA(Pro) + L-proline + ATP = L-prolyl-tRNA(Pro) + AMP + diphosphate. In terms of biological role, catalyzes the attachment of proline to tRNA(Pro) in a two-step reaction: proline is first activated by ATP to form Pro-AMP and then transferred to the acceptor end of tRNA(Pro). As ProRS can inadvertently accommodate and process non-cognate amino acids such as alanine and cysteine, to avoid such errors it has two additional distinct editing activities against alanine. One activity is designated as 'pretransfer' editing and involves the tRNA(Pro)-independent hydrolysis of activated Ala-AMP. The other activity is designated 'posttransfer' editing and involves deacylation of mischarged Ala-tRNA(Pro). The misacylated Cys-tRNA(Pro) is not edited by ProRS. This is Proline--tRNA ligase from Thermotoga neapolitana (strain ATCC 49049 / DSM 4359 / NBRC 107923 / NS-E).